Reading from the N-terminus, the 475-residue chain is Aspartyl/glutamyl-tRNA(Asn/Gln) amidotransferase subunit B (475 aa).

This sequence belongs to the GatB/GatE family. GatB subfamily. Heterotrimer of A, B and C subunits.

It catalyses the reaction L-glutamyl-tRNA(Gln) + L-glutamine + ATP + H2O = L-glutaminyl-tRNA(Gln) + L-glutamate + ADP + phosphate + H(+). The enzyme catalyses L-aspartyl-tRNA(Asn) + L-glutamine + ATP + H2O = L-asparaginyl-tRNA(Asn) + L-glutamate + ADP + phosphate + 2 H(+). Allows the formation of correctly charged Asn-tRNA(Asn) or Gln-tRNA(Gln) through the transamidation of misacylated Asp-tRNA(Asn) or Glu-tRNA(Gln) in organisms which lack either or both of asparaginyl-tRNA or glutaminyl-tRNA synthetases. The reaction takes place in the presence of glutamine and ATP through an activated phospho-Asp-tRNA(Asn) or phospho-Glu-tRNA(Gln). This is Aspartyl/glutamyl-tRNA(Asn/Gln) amidotransferase subunit B from Bacillus anthracis (strain A0248).